The chain runs to 240 residues: Ribosomal RNA small subunit methyltransferase G (240 aa).

S-adenosyl-L-methionine-binding positions include glycine 79, phenylalanine 84, 130–131 (AE), and arginine 149.

It belongs to the methyltransferase superfamily. RNA methyltransferase RsmG family.

It is found in the cytoplasm. Specifically methylates the N7 position of a guanine in 16S rRNA. The protein is Ribosomal RNA small subunit methyltransferase G of Desulforamulus reducens (strain ATCC BAA-1160 / DSM 100696 / MI-1) (Desulfotomaculum reducens).